A 2291-amino-acid chain; its full sequence is Spectrin beta chain (2291 aa).

Residues 1–271 form an actin-binding region; the sequence is MTTDISIVRW…IITYVVTYYH (271 aa). Calponin-homology (CH) domains are found at residues 50–154 and 169–274; these read SVQK…LRFQ and KSAK…HYFS. Spectrin repeat units follow at residues 300-408, 420-521, 525-633, 636-739, 743-843, 848-948, 954-1057, 1060-1166, 1170-1272, 1276-1376, 1386-1484, 1488-1591, 1594-1697, 1701-1802, 1807-1909, 1913-2015, and 2020-2089; these read VHDY…ALRE, AARF…MRLE, QLQQ…RLEE, KLWQ…RLEN, YFQL…QRLL, LYKL…MDDL, VQTF…KLEE, DLHR…VLLS, DQQL…EKLK, KLHE…GAML, QQTC…KALE, EAFQ…HLLE, KVQQ…RLNE, LFML…TQML, ELHK…QKLA, DLFR…ENLQ, and VYQF…KEMK. Positions 2097–2140 are enriched in basic and acidic residues; that stretch reads EAERQRIKEEQEAKAASEAAEQAKREAERRDDVDVGASHDDSER. The interval 2097-2152 is disordered; it reads EAERQRIKEEQEAKAASEAAEQAKREAERRDDVDVGASHDDSERGGTPGAGEGHEG. Residues 2147–2259 form the PH domain; it reads GEGHEGYVTR…WVTSLKAQSD (113 aa). Residue serine 2195 is modified to Phosphoserine. The span at 2262-2275 shows a compositional bias: polar residues; that stretch reads AVAASRSQTLPATS. The tract at residues 2262 to 2291 is disordered; sequence AVAASRSQTLPATSQKDEPKRRSFFTLKKK.

The protein belongs to the spectrin family. Native spectrin molecule is a tetramer composed of two antiparallel heterodimers joined head to head so that each end of the native molecule includes the C-terminus of the alpha subunit and the N-terminus of the beta subunit.

Its subcellular location is the cytoplasm. It is found in the cytoskeleton. It localises to the cell cortex. Spectrin is the major constituent of the cytoskeletal network underlying the erythrocyte plasma membrane. It associates with band 4.1 and actin to form the cytoskeletal superstructure of the erythrocyte plasma membrane. Interacts with calmodulin in a calcium-dependent manner. This chain is Spectrin beta chain (beta-Spec), found in Drosophila melanogaster (Fruit fly).